Consider the following 359-residue polypeptide: F-box/kelch-repeat protein At1g15670 (359 aa).

Residues 2-49 (ELIPDLPETVAYECLLRSSYKQFPLMASVCKLWQREISLSDFFRHRKA) enclose the F-box domain. Kelch repeat units follow at residues 119 to 167 (DLVV…ASDS), 170 to 217 (NVFV…FHAG), 219 to 269 (FHVI…CAAG), 271 to 310 (NGDLYACCRRDLMMMKDDTWYKVGNLPADVCNVSYVAIRR), and 313 to 358 (NLVV…CFLE).

This Arabidopsis thaliana (Mouse-ear cress) protein is F-box/kelch-repeat protein At1g15670.